The following is a 977-amino-acid chain: uncharacterized protein (977 aa).

Positions 1 to 24 (MMQQRSGSLSLLSNAVQAGQSSDP) are enriched in polar residues. The disordered stretch occupies residues 1–65 (MMQQRSGSLS…HEKTKAGKDR (65 aa)). The zn(2)-C6 fungal-type DNA-binding region spans 72 to 99 (CQSCRKKKVKCSGERPSCDQCLKHNIPC). The interval 176-195 (LSHPTIVPSSNSSSLLNSTN) is disordered. Residues 177–195 (SHPTIVPSSNSSSLLNSTN) show a composition bias toward low complexity. S220 is subject to Phosphoserine. 3 disordered regions span residues 287–307 (TDSL…DSNR), 357–380 (NSAS…NNSL), and 751–774 (HTPI…ANGA). The span at 364-379 (STSYTNNNDTTSDNNS) shows a compositional bias: low complexity. Polar residues predominate over residues 751–770 (HTPINVTNGESQNNSNNDPS).

It is found in the cytoplasm. Its subcellular location is the nucleus. This is an uncharacterized protein from Schizosaccharomyces pombe (strain 972 / ATCC 24843) (Fission yeast).